The primary structure comprises 173 residues: EDLRNVTPPKVSLFEPSKAEIANKQKATLVCLARGFFPDHVELSWWVNGKEVHSGVSTDPQAYKESNYSYCLSSRLRVSATFWHNPRNHFRCQVQFHGLSEEDKWPEGSPKPVTQNISAEAWGRADCGITSASYQQGVLSATILYEILLGKATLYAVLVSTLVVMAMVKRKNS.

The c region stretch occupies residues 1–146; it reads EDLRNVTPPK…GVLSATILYE (146 aa). Residues Cys31 and Cys71 are joined by a disulfide bond. Residues Asn67 and Asn116 are each glycosylated (N-linked (GlcNAc...) asparagine). A helical transmembrane segment spans residues 146 to 167; that stretch reads EILLGKATLYAVLVSTLVVMAM. Residues 168 to 173 are Cytoplasmic-facing; sequence VKRKNS.

It is found in the membrane. In Mus musculus (Mouse), this protein is T-cell receptor beta-1 chain C region.